The chain runs to 384 residues: MGAHAIVTDANISSSLENNTTGITAFSMPGWQLALWATAYLVLVLVAVTGNATVIWIILAHQRMRTVTNYFIVNLALADLCMAAFNAAFNFVYASHNIWYFGRAFCHFQNLFPITAMFVSIYSMTAIAADRYVAIVHPFQPRLSAPGTRAVIAGIWLLALALAFPQCFYSTITMDQGATKCVVVWPEDNGSKMLLLYHLVVIALIYVLPLLVMLLAYSVIGLTLWRREVPRHQVHGASLRHLRAKKKFVKTMVLVVVTFAICWLPYHFYFILGSFQEDIYYHKFIQQVYLALFWLAMSSTMYNPIIYCCLNHRFRSGFRLAFRCCPWVTPTEEDKIELTHTPSLSARINRCHTKETFFMAGETALSPATNGQARGPQDGLPDEP.

Residues 1-32 (MGAHAIVTDANISSSLENNTTGITAFSMPGWQ) are Extracellular-facing. N-linked (GlcNAc...) asparagine glycosylation is found at asparagine 11, asparagine 18, and asparagine 19. The helical transmembrane segment at 33 to 56 (LALWATAYLVLVLVAVTGNATVIW) threads the bilayer. At 57-69 (IILAHQRMRTVTN) the chain is on the cytoplasmic side. A helical transmembrane segment spans residues 70-90 (YFIVNLALADLCMAAFNAAFN). Over 91 to 107 (FVYASHNIWYFGRAFCH) the chain is Extracellular. The cysteines at positions 106 and 181 are disulfide-linked. Residues 108 to 129 (FQNLFPITAMFVSIYSMTAIAA) form a helical membrane-spanning segment. Over 130–149 (DRYVAIVHPFQPRLSAPGTR) the chain is Cytoplasmic. Residues 150-170 (AVIAGIWLLALALAFPQCFYS) form a helical membrane-spanning segment. Residues 171 to 196 (TITMDQGATKCVVVWPEDNGSKMLLL) are Extracellular-facing. A helical membrane pass occupies residues 197–218 (YHLVVIALIYVLPLLVMLLAYS). Topologically, residues 219–251 (VIGLTLWRREVPRHQVHGASLRHLRAKKKFVKT) are cytoplasmic. The chain crosses the membrane as a helical span at residues 252 to 272 (MVLVVVTFAICWLPYHFYFIL). The Extracellular segment spans residues 273–290 (GSFQEDIYYHKFIQQVYL). The chain crosses the membrane as a helical span at residues 291 to 310 (ALFWLAMSSTMYNPIIYCCL). The Cytoplasmic segment spans residues 311 to 384 (NHRFRSGFRL…GPQDGLPDEP (74 aa)). Cysteine 324 carries S-palmitoyl cysteine lipidation.

It belongs to the G-protein coupled receptor 1 family.

The protein localises to the cell membrane. In terms of biological role, this is a receptor for the tachykinin neuropeptide substance K (neurokinin A). It is associated with G proteins that activate a phosphatidylinositol-calcium second messenger system. The chain is Substance-K receptor (TACR2) from Canis lupus familiaris (Dog).